Consider the following 429-residue polypeptide: Proton extrusion protein PxcA (429 aa).

A disordered region spans residues 139 to 161; sequence LNGPEAPQTNGDRPDNKPKVETV. Over residues 150–161 the composition is skewed to basic and acidic residues; that stretch reads DRPDNKPKVETV. Helical transmembrane passes span 211–231, 306–326, 353–373, and 389–409; these read FLLTLVIVPLLVHQLAKIAIT, AYENIFSDIFSFFAFVGILLI, LIILFTDIFVGYHSPHGWEII, and FNFLFIATFPVILDTVLKYWI.

It belongs to the CemA family.

It is found in the cell inner membrane. Its function is as follows. Required for H(+) efflux immediately after light irradiation to form a rapid H(+) concentration gradient across the thylakoid membranes. Together with PxcL, contributes to transient H(+) uptake following dark to light transition. This is Proton extrusion protein PxcA from Picosynechococcus sp. (strain ATCC 27264 / PCC 7002 / PR-6) (Agmenellum quadruplicatum).